Reading from the N-terminus, the 116-residue chain is NADH-ubiquinone oxidoreductase chain 3 (116 aa).

3 helical membrane passes run 3 to 23, 56 to 76, and 87 to 107; these read LITTIITITITLSAVLATISF, FFLIAILFLLFDLEIALLLPL, and LTLIWSTAVLALLTLGLIYEW.

The protein belongs to the complex I subunit 3 family.

The protein resides in the mitochondrion membrane. It carries out the reaction a ubiquinone + NADH + 5 H(+)(in) = a ubiquinol + NAD(+) + 4 H(+)(out). In terms of biological role, core subunit of the mitochondrial membrane respiratory chain NADH dehydrogenase (Complex I) that is believed to belong to the minimal assembly required for catalysis. Complex I functions in the transfer of electrons from NADH to the respiratory chain. The immediate electron acceptor for the enzyme is believed to be ubiquinone. The chain is NADH-ubiquinone oxidoreductase chain 3 (MT-ND3) from Oncorhynchus tshawytscha (Chinook salmon).